A 264-amino-acid polypeptide reads, in one-letter code: 3-methyl-2-oxobutanoate hydroxymethyltransferase 2 (264 aa).

Mg(2+)-binding residues include D44 and D83. 3-methyl-2-oxobutanoate contacts are provided by residues 44–45 (DS), D83, and K111. Residue E113 participates in Mg(2+) binding. The active-site Proton acceptor is E180.

This sequence belongs to the PanB family. As to quaternary structure, homodecamer; pentamer of dimers. Mg(2+) is required as a cofactor.

Its subcellular location is the cytoplasm. The catalysed reaction is 3-methyl-2-oxobutanoate + (6R)-5,10-methylene-5,6,7,8-tetrahydrofolate + H2O = 2-dehydropantoate + (6S)-5,6,7,8-tetrahydrofolate. Its pathway is cofactor biosynthesis; (R)-pantothenate biosynthesis; (R)-pantoate from 3-methyl-2-oxobutanoate: step 1/2. Functionally, catalyzes the reversible reaction in which hydroxymethyl group from 5,10-methylenetetrahydrofolate is transferred onto alpha-ketoisovalerate to form ketopantoate. The chain is 3-methyl-2-oxobutanoate hydroxymethyltransferase 2 from Hahella chejuensis (strain KCTC 2396).